Reading from the N-terminus, the 256-residue chain is Thioredoxin-dependent peroxide reductase, mitochondrial (256 aa).

Residues 1 to 61 constitute a mitochondrion transit peptide; that stretch reads MAAAVGRLLR…KLFSTSSSCH (61 aa). Positions 63–221 constitute a Thioredoxin domain; the sequence is PAVTQHAPYF…TLRLVKAFQY (159 aa). Residue K83 is modified to N6-succinyllysine. Position 91 is an N6-acetyllysine; alternate (K91). K91 is modified (N6-succinyllysine; alternate). C108 serves as the catalytic Cysteine sulfenic acid (-SOH) intermediate. Phosphothreonine is present on T146.

Belongs to the peroxiredoxin family. AhpC/Prx1 subfamily. In terms of assembly, homodimer; disulfide-linked, upon oxidation. 6 homodimers assemble to form a ring-like dodecamer. Interacts with NEK6. Interacts with LRRK2. Interacts with MAP3K13. Interacts with RPS6KC1 (via PX domain). In terms of processing, phosphorylated by LRRK2; phosphorylation reduces perodixase activity. Post-translationally, the enzyme can be inactivated by further oxidation of the cysteine sulfenic acid (C(P)-SOH) to sulphinic acid (C(P)-SO2H) and sulphonic acid (C(P)-SO3H) instead of its condensation to a disulfide bond. S-palmitoylated.

Its subcellular location is the mitochondrion. It localises to the cytoplasm. The protein localises to the early endosome. It carries out the reaction a hydroperoxide + [thioredoxin]-dithiol = an alcohol + [thioredoxin]-disulfide + H2O. Thiol-specific peroxidase that catalyzes the reduction of hydrogen peroxide and organic hydroperoxides to water and alcohols, respectively. Plays a role in cell protection against oxidative stress by detoxifying peroxides. Acts synergistically with MAP3K13 to regulate the activation of NF-kappa-B in the cytosol. Required for the maintenance of physical strength. The chain is Thioredoxin-dependent peroxide reductase, mitochondrial (PRDX3) from Homo sapiens (Human).